Here is a 69-residue protein sequence, read N- to C-terminus: Large ribosomal subunit protein bL28 (69 aa).

This sequence belongs to the bacterial ribosomal protein bL28 family.

This Oleidesulfovibrio alaskensis (strain ATCC BAA-1058 / DSM 17464 / G20) (Desulfovibrio alaskensis) protein is Large ribosomal subunit protein bL28.